Consider the following 1216-residue polypeptide: 1-phosphatidylinositol 4,5-bisphosphate phosphodiesterase beta-1 (1216 aa).

A lipid anchor (S-palmitoyl cysteine) is attached at Cys17. Ser236 carries the post-translational modification Phosphoserine. In terms of domain architecture, PI-PLC X-box spans 316–467 (EDMSQPLSHY…LMYKILVKNK (152 aa)). Residues His331 and His378 contribute to the active site. Ser417 is subject to Phosphoserine. The disordered stretch occupies residues 469–534 (KSHKSSEGSG…MDEGTAGSEA (66 aa)). Positions 472–483 (KSSEGSGKKKLS) are enriched in basic and acidic residues. Residues 491–501 (SDSSSVFEPSS) show a composition bias toward low complexity. The span at 507–518 (ADTESDDDDDDD) shows a compositional bias: acidic residues. Thr509 bears the Phosphothreonine mark. A phosphoserine mark is found at Ser511 and Ser582. In terms of domain architecture, PI-PLC Y-box spans 540-656 (MSNLVNYIQP…GYRLKPEFMR (117 aa)). Residues 656–784 (RRPDKHFDPF…CLRNERNQPL (129 aa)) form the C2 domain. Disordered stretches follow at residues 834-891 (DEEE…VKAP), 933-993 (LVKR…IEQD), 1071-1095 (KMDK…EEEK), and 1172-1216 (KISE…DTPL). The residue at position 887 (Ser887) is a Phosphoserine; by PKC. 2 stretches are compositionally biased toward basic and acidic residues: residues 941-951 (TTDLIKEHTTK) and 959-979 (YLRR…KKSE). Residues Ser978 and Ser987 each carry the phosphoserine modification. Over residues 980-991 (PSSPDHVSSTIE) the composition is skewed to polar residues. Residues 1075-1095 (KRQEKITEAKSKDKSQMEEEK) show a composition bias toward basic and acidic residues. Residues 1187–1198 (TSDSGKLNQKPP) are compositionally biased toward polar residues. 2 positions are modified to phosphoserine: Ser1199 and Ser1200. Residues 1207 to 1216 (NPGKEFDTPL) show a composition bias toward basic and acidic residues.

Interacts with DGKQ. Ca(2+) is required as a cofactor. In terms of processing, palmitoylated. Palmitoylation at Cys-17 by ZDHHC21 regulates the signaling activity of PLCB1 and the function of the endothelial barrier. Palmitoylation by ZDHHC21 is stimulated by inflammation.

The protein resides in the nucleus membrane. It is found in the cytoplasm. It catalyses the reaction a 1,2-diacyl-sn-glycero-3-phospho-(1D-myo-inositol-4,5-bisphosphate) + H2O = 1D-myo-inositol 1,4,5-trisphosphate + a 1,2-diacyl-sn-glycerol + H(+). The enzyme catalyses a 1,2-diacyl-sn-glycero-3-phospho-(1D-myo-inositol) + H2O = 1D-myo-inositol 1-phosphate + a 1,2-diacyl-sn-glycerol + H(+). Catalyzes the hydrolysis of 1-phosphatidylinositol 4,5-bisphosphate into diacylglycerol (DAG) and inositol 1,4,5-trisphosphate (IP3) and mediates intracellular signaling downstream of G protein-coupled receptors. Regulates the function of the endothelial barrier. In Bos taurus (Bovine), this protein is 1-phosphatidylinositol 4,5-bisphosphate phosphodiesterase beta-1 (PLCB1).